A 492-amino-acid chain; its full sequence is Catalase (492 aa).

Catalysis depends on residues histidine 65 and asparagine 138. Tyrosine 348 serves as a coordination point for heme.

Belongs to the catalase family. In terms of assembly, homotetramer. It depends on heme as a cofactor.

It is found in the cytoplasm. The protein localises to the cytosol. It localises to the peroxisome matrix. It catalyses the reaction 2 H2O2 = O2 + 2 H2O. Its function is as follows. Catalyzes the degradation of hydrogen peroxide (H(2)O(2)) generated by peroxisomal oxidases to water and oxygen, thereby protecting cells from the toxic effects of hydrogen peroxide. The protein is Catalase of Helianthus annuus (Common sunflower).